The following is an 835-amino-acid chain: Ribosome-releasing factor 2, mitochondrial (835 aa).

The transit peptide at 1-50 (MPWCNTRLRTCGASPKIFLRRVRCPVLLHNWTIGRVSSVSKMILRFLRSY) directs the protein to the mitochondrion. The tr-type G domain occupies 57-343 (TRVRNIGIIA…AVVDYLPSPA (287 aa)). Residues 66 to 73 (AHIDAGKT), 131 to 135 (DTPGH), and 183 to 186 (NKMD) contribute to the GTP site.

It belongs to the TRAFAC class translation factor GTPase superfamily. Classic translation factor GTPase family. EF-G/EF-2 subfamily.

It is found in the mitochondrion. Mitochondrial GTPase that mediates the disassembly of ribosomes from messenger RNA at the termination of mitochondrial protein biosynthesis. Not involved in the GTP-dependent ribosomal translocation step during translation elongation. The chain is Ribosome-releasing factor 2, mitochondrial from Eremothecium gossypii (strain ATCC 10895 / CBS 109.51 / FGSC 9923 / NRRL Y-1056) (Yeast).